A 385-amino-acid chain; its full sequence is 1-deoxy-D-xylulose 5-phosphate reductoisomerase (385 aa).

Residues threonine 10, glycine 11, serine 12, isoleucine 13, lysine 37, and asparagine 124 each contribute to the NADPH site. Lysine 125 contributes to the 1-deoxy-D-xylulose 5-phosphate binding site. NADPH is bound at residue glutamate 126. Aspartate 150 serves as a coordination point for Mn(2+). Serine 151, glutamate 152, serine 176, and histidine 199 together coordinate 1-deoxy-D-xylulose 5-phosphate. Residue glutamate 152 coordinates Mn(2+). Residue glycine 205 coordinates NADPH. 1-deoxy-D-xylulose 5-phosphate contacts are provided by serine 212, asparagine 217, lysine 218, and glutamate 221. Residue glutamate 221 participates in Mn(2+) binding.

This sequence belongs to the DXR family. It depends on Mg(2+) as a cofactor. Mn(2+) serves as cofactor.

The enzyme catalyses 2-C-methyl-D-erythritol 4-phosphate + NADP(+) = 1-deoxy-D-xylulose 5-phosphate + NADPH + H(+). Its pathway is isoprenoid biosynthesis; isopentenyl diphosphate biosynthesis via DXP pathway; isopentenyl diphosphate from 1-deoxy-D-xylulose 5-phosphate: step 1/6. In terms of biological role, catalyzes the NADPH-dependent rearrangement and reduction of 1-deoxy-D-xylulose-5-phosphate (DXP) to 2-C-methyl-D-erythritol 4-phosphate (MEP). The sequence is that of 1-deoxy-D-xylulose 5-phosphate reductoisomerase from Clostridium botulinum (strain 657 / Type Ba4).